Reading from the N-terminus, the 172-residue chain is Diphosphoinositol polyphosphate phosphohydrolase 1 (172 aa).

The residue at position 1 (Met1) is an N-acetylmethionine. Residues Arg10, 18–20 (KKR), and 39–41 (SSR) each bind substrate. The region spanning 17 to 142 (YKKRAACLCF…KPVQASYFET (126 aa)) is the Nudix hydrolase domain. The Mg(2+) site is built by Gly50 and Glu66. The short motif at 51 to 72 (GGMEPEEEPSVAAVREVCEEAG) is the Nudix box element. Glu69 acts as the Proton acceptor in catalysis. Glu70 contacts Mg(2+). Residues 89–91 (RKH), Arg115, and Lys133 each bind substrate.

This sequence belongs to the Nudix hydrolase family. DIPP subfamily. In terms of assembly, monomer. Requires Mg(2+) as cofactor. The cofactor is Mn(2+). Zn(2+) serves as cofactor. In terms of tissue distribution, widely expressed. Expressed at higher level in brain, heart, pancreas and liver. Also expressed in placenta, lung and kidney.

Its subcellular location is the cytoplasm. The protein resides in the nucleus. It catalyses the reaction diphospho-myo-inositol polyphosphate + H2O = myo-inositol polyphosphate + phosphate.. The catalysed reaction is 5-diphospho-1D-myo-inositol 1,2,3,4,6-pentakisphosphate + H2O = 1D-myo-inositol hexakisphosphate + phosphate + H(+). The enzyme catalyses 3,5-bis(diphospho)-1D-myo-inositol 1,2,4,6-tetrakisphosphate + H2O = 3-diphospho-1D-myo-inositol 1,2,4,5,6-pentakisphosphate + phosphate + 2 H(+). It carries out the reaction [phosphate](n+1) + n H2O = (n+1) phosphate + n H(+). It catalyses the reaction P(1),P(5)-bis(5'-adenosyl) pentaphosphate + H2O = ADP + ATP + 2 H(+). The catalysed reaction is P(1),P(6)-bis(5'-adenosyl) hexaphosphate + H2O = 2 ATP + 2 H(+). The enzyme catalyses P(1),P(4)-bis(5'-adenosyl) tetraphosphate + H2O = AMP + ATP + 2 H(+). It carries out the reaction a 5'-end (N(7)-methyl 5'-triphosphoguanosine)-ribonucleoside in mRNA + H2O = N(7)-methyl-GMP + a 5'-end diphospho-ribonucleoside in mRNA + 2 H(+). It catalyses the reaction a 5'-end (N(7)-methyl 5'-triphosphoguanosine)-ribonucleoside in mRNA + H2O = N(7)-methyl-GDP + a 5'-end phospho-ribonucleoside in mRNA + 2 H(+). With respect to regulation, endopolyphospahatase activity is inhibited by NaF, NaPPi, beta-glycerol phosphate and heparin. 5-diphosphoinositol pentakisphosphate (5-InsP7) inhibits its mRNA decapping activity. Functionally, cleaves a beta-phosphate from the diphosphate groups in PP-InsP5 (diphosphoinositol pentakisphosphate) and [PP]2-InsP4 (bisdiphosphoinositol tetrakisphosphate), suggesting that it may play a role in signal transduction. InsP6 (inositol hexakisphosphate) is not a substrate. Acts as a negative regulator of the ERK1/2 pathway. Also able to catalyze the hydrolysis of dinucleoside oligophosphates, with diadenosine 5',5'''-P1,P6-hexaphosphate (Ap6A) and diadenosine 5',5'''- P1,P5-pentaphosphate (Ap5A) being the preferred substrates. The major reaction products are ADP and p4a from Ap6A and ADP and ATP from Ap5A. Also able to hydrolyze 5-phosphoribose 1-diphosphate. Acts as a decapping enzyme that modulates the stability of a subset of mRNAs implicated in cell motility. Hydrolyzes monomethylated capped RNA after both the alpha- and beta-phosphates generating m7GMP + ppRNA and m7GDP + pRNA. Can hydrolyze unmethylated capped RNAs. Divalent cations zinc, magnesium and manganese determine its substrate specificity. Exhibits diphosphoinositol polyphosphate phosphohydrolase in the presence of magnesium ions, diadenosine hexaphosphate hydrolase activity in the presence of manganese ions and endopolyphosphatase activity in the presence of zinc ions. Plays an important role in limiting DNA damage and maintaining cell survival upon oxidative stress via its endopolyphosphatase activity. This chain is Diphosphoinositol polyphosphate phosphohydrolase 1, found in Homo sapiens (Human).